The primary structure comprises 166 residues: tRNA-acetylating toxin (166 aa).

A disordered region spans residues 1–22 (MSGYSAPRRISDADDVTSFSSG). Residues 1–162 (MSGYSAPRRI…LMLLMKDARA (162 aa)) enclose the N-acetyltransferase domain. The active site involves Tyr-138.

It belongs to the acetyltransferase family. GNAT subfamily. Homodimer, forms a complex with cognate antitoxin TacA.

It carries out the reaction glycyl-tRNA(Gly) + acetyl-CoA = N-acetylglycyl-tRNA(Gly) + CoA + H(+). Toxic component of a type II toxin-antitoxin (TA) system. Overexpression of this gene alone in M.smegmatis inhibits growth, while overexpression of the tacA-tacT operon does not. Acetylates glycyl-tRNA(Gly) but not other tRNAs, blocks in vitro translation in the presence, but not absence, of acetyl-coenzyme A. Peptidyl-tRNA hydrolase (pth) counteracts the product of this enzyme in vitro. Neutralized by cognate antitoxin TacA. Does not seem to be active in laboratory growth conditions. Its function is as follows. TacA-TacT both represses and derepresses expression of its own operon. The protein is tRNA-acetylating toxin of Mycobacterium tuberculosis (strain ATCC 25618 / H37Rv).